The following is an 825-amino-acid chain: Probable inorganic carbon transporter subunit DabA (825 aa).

Positions 346, 348, 516, and 531 each coordinate Zn(2+).

This sequence belongs to the inorganic carbon transporter (TC 9.A.2) DabA family. In terms of assembly, forms a complex with DabB. Zn(2+) is required as a cofactor.

Its subcellular location is the cell inner membrane. Functionally, part of an energy-coupled inorganic carbon pump. This is Probable inorganic carbon transporter subunit DabA from Paracidovorax citrulli (strain AAC00-1) (Acidovorax citrulli).